The chain runs to 145 residues: Deoxyuridine 5'-triphosphate nucleotidohydrolase (145 aa).

Substrate-binding positions include Arg65–Gly67, Asn78, Thr82–Asp84, and Met92.

The protein belongs to the dUTPase family. Mg(2+) serves as cofactor.

The catalysed reaction is dUTP + H2O = dUMP + diphosphate + H(+). It participates in pyrimidine metabolism; dUMP biosynthesis; dUMP from dCTP (dUTP route): step 2/2. Its function is as follows. This enzyme is involved in nucleotide metabolism: it produces dUMP, the immediate precursor of thymidine nucleotides and it decreases the intracellular concentration of dUTP so that uracil cannot be incorporated into DNA. This Chlorobium phaeobacteroides (strain BS1) protein is Deoxyuridine 5'-triphosphate nucleotidohydrolase.